A 210-amino-acid polypeptide reads, in one-letter code: Thymidylate kinase (210 aa).

ATP is bound at residue 10 to 17 (GPEGAGKS).

The protein belongs to the thymidylate kinase family.

The catalysed reaction is dTMP + ATP = dTDP + ADP. Its function is as follows. Phosphorylation of dTMP to form dTDP in both de novo and salvage pathways of dTTP synthesis. In Pseudomonas fluorescens (strain SBW25), this protein is Thymidylate kinase.